The chain runs to 288 residues: ATP synthase gamma chain (288 aa).

The protein belongs to the ATPase gamma chain family. In terms of assembly, F-type ATPases have 2 components, CF(1) - the catalytic core - and CF(0) - the membrane proton channel. CF(1) has five subunits: alpha(3), beta(3), gamma(1), delta(1), epsilon(1). CF(0) has three main subunits: a, b and c.

The protein resides in the cell membrane. Its function is as follows. Produces ATP from ADP in the presence of a proton gradient across the membrane. The gamma chain is believed to be important in regulating ATPase activity and the flow of protons through the CF(0) complex. The polypeptide is ATP synthase gamma chain (Staphylococcus epidermidis (strain ATCC 35984 / DSM 28319 / BCRC 17069 / CCUG 31568 / BM 3577 / RP62A)).